Here is a 65-residue protein sequence, read N- to C-terminus: Large ribosomal subunit protein uL29 (65 aa).

It belongs to the universal ribosomal protein uL29 family.

This is Large ribosomal subunit protein uL29 from Buchnera aphidicola subsp. Cinara cedri (strain Cc).